The following is a 335-amino-acid chain: Holliday junction branch migration complex subunit RuvB (335 aa).

The interval 4 to 184 is large ATPase domain (RuvB-L); that stretch reads VDRIVSANAK…FGIVQRLEFY (181 aa). ATP-binding positions include Ile-23, Arg-24, Gly-65, Lys-68, Thr-69, Thr-70, 131-133, Arg-174, Tyr-184, and Arg-221; that span reads EDY. Thr-69 contacts Mg(2+). Positions 185-255 are small ATPAse domain (RuvB-S); sequence SVEDLASIVT…IAQEALKMLD (71 aa). Positions 258-335 are head domain (RuvB-H); that stretch reads LAGFDFMDRK…RHFGLEQIEK (78 aa). DNA is bound by residues Arg-294, Arg-313, and Arg-318.

This sequence belongs to the RuvB family. As to quaternary structure, homohexamer. Forms an RuvA(8)-RuvB(12)-Holliday junction (HJ) complex. HJ DNA is sandwiched between 2 RuvA tetramers; dsDNA enters through RuvA and exits via RuvB. An RuvB hexamer assembles on each DNA strand where it exits the tetramer. Each RuvB hexamer is contacted by two RuvA subunits (via domain III) on 2 adjacent RuvB subunits; this complex drives branch migration. In the full resolvosome a probable DNA-RuvA(4)-RuvB(12)-RuvC(2) complex forms which resolves the HJ.

The protein resides in the cytoplasm. It carries out the reaction ATP + H2O = ADP + phosphate + H(+). Functionally, the RuvA-RuvB-RuvC complex processes Holliday junction (HJ) DNA during genetic recombination and DNA repair, while the RuvA-RuvB complex plays an important role in the rescue of blocked DNA replication forks via replication fork reversal (RFR). RuvA specifically binds to HJ cruciform DNA, conferring on it an open structure. The RuvB hexamer acts as an ATP-dependent pump, pulling dsDNA into and through the RuvAB complex. RuvB forms 2 homohexamers on either side of HJ DNA bound by 1 or 2 RuvA tetramers; 4 subunits per hexamer contact DNA at a time. Coordinated motions by a converter formed by DNA-disengaged RuvB subunits stimulates ATP hydrolysis and nucleotide exchange. Immobilization of the converter enables RuvB to convert the ATP-contained energy into a lever motion, pulling 2 nucleotides of DNA out of the RuvA tetramer per ATP hydrolyzed, thus driving DNA branch migration. The RuvB motors rotate together with the DNA substrate, which together with the progressing nucleotide cycle form the mechanistic basis for DNA recombination by continuous HJ branch migration. Branch migration allows RuvC to scan DNA until it finds its consensus sequence, where it cleaves and resolves cruciform DNA. This is Holliday junction branch migration complex subunit RuvB from Histophilus somni (strain 129Pt) (Haemophilus somnus).